A 440-amino-acid chain; its full sequence is D-serine dehydratase (440 aa).

At lysine 116 the chain carries N6-(pyridoxal phosphate)lysine.

It belongs to the serine/threonine dehydratase family. DsdA subfamily. Monomer. The cofactor is pyridoxal 5'-phosphate.

It catalyses the reaction D-serine = pyruvate + NH4(+). This is D-serine dehydratase from Salmonella arizonae (strain ATCC BAA-731 / CDC346-86 / RSK2980).